A 153-amino-acid polypeptide reads, in one-letter code: TM2 domain-containing protein DDB_G0277895 (153 aa).

One can recognise a TM2 domain in the interval 3–50 (QKSVCVTYLLWLFFGLFGIHRFYLNRPCSGVLYLFTCGCFFIGWFIDI). The next 2 membrane-spanning stretches (helical) occupy residues 6 to 26 (VCVTYLLWLFFGLFGIHRFYL) and 33 to 53 (VLYLFTCGCFFIGWFIDICLI). Residues 85–153 (GSPQQQPYGA…GNYPPPYGPQ (69 aa)) form a disordered region. 6 tandem repeats follow at residues 89–96 (QQPYGAPP), 97–104 (QQPYGAPP), 105–112 (QQPYGAPP), 113–120 (QQPYGAPP), 121–128 (QQPYGAPP), and 129–136 (PQPYGAPP). The interval 89–136 (QQPYGAPPQQPYGAPPQQPYGAPPQQPYGAPPQQPYGAPPPQPYGAPP) is 6 X 8 AA tandem repeat of Q-Q-P-Y-G-A-P-P. Residues 93-153 (GAPPQQPYGA…GNYPPPYGPQ (61 aa)) show a composition bias toward pro residues.

Belongs to the TM2 family.

Its subcellular location is the membrane. The protein is TM2 domain-containing protein DDB_G0277895 of Dictyostelium discoideum (Social amoeba).